The primary structure comprises 408 residues: Intracellular coagulation inhibitor 2 (408 aa).

Residues 1–22 form the signal peptide; that stretch reads MLSRRTLDCCLVMLIVSTTFCQ. C50 and C249 form a disulfide bridge. N-linked (GlcNAc...) asparagine glycosylation is present at N174.

It belongs to the serpin family. As to quaternary structure, monomer. Forms a covalent heterodimer with clotting factor C chain B. Forms a covalent heterodimer with proclotting enzyme heavy chain. In terms of tissue distribution, specifically expressed in hemocytes (at protein level).

It is found in the secreted. Serine protease inhibitor that inhibits proclotting enzyme and to a lesser extent clotting factor C and clotting factor G. The sequence is that of Intracellular coagulation inhibitor 2 from Tachypleus tridentatus (Japanese horseshoe crab).